Reading from the N-terminus, the 433-residue chain is Gamma-glutamyl phosphate reductase (433 aa).

This sequence belongs to the gamma-glutamyl phosphate reductase family.

Its subcellular location is the cytoplasm. It catalyses the reaction L-glutamate 5-semialdehyde + phosphate + NADP(+) = L-glutamyl 5-phosphate + NADPH + H(+). The protein operates within amino-acid biosynthesis; L-proline biosynthesis; L-glutamate 5-semialdehyde from L-glutamate: step 2/2. Functionally, catalyzes the NADPH-dependent reduction of L-glutamate 5-phosphate into L-glutamate 5-semialdehyde and phosphate. The product spontaneously undergoes cyclization to form 1-pyrroline-5-carboxylate. This Psychrobacter cryohalolentis (strain ATCC BAA-1226 / DSM 17306 / VKM B-2378 / K5) protein is Gamma-glutamyl phosphate reductase.